The primary structure comprises 848 residues: Protein SEY1 (848 aa).

The Cytoplasmic segment spans residues 1–733 (MNGNFAAVGS…KRGALGGMTQ (733 aa)). One can recognise a GB1/RHD3-type G domain in the interval 47 to 277 (GFNYHLISVF…FVGGVFLPEY (231 aa)). 57-64 (GSQSTGKS) serves as a coordination point for GTP. Residues 734 to 754 (VPLYFWIALFAFGWNEIWMVI) form a helical membrane-spanning segment. The Lumenal segment spans residues 755–757 (RNP). Residues 758–778 (FLFILLLLSAGGTYVAYNLSL) traverse the membrane as a helical segment. Residues 779 to 848 (LGPMMQMTNA…KKKDYDDDGI (70 aa)) lie on the Cytoplasmic side of the membrane. Positions 815–848 (LAMPASSKSSGGEQVRMDTLDSKGKKKDYDDDGI) are disordered. The segment covering 829 to 848 (VRMDTLDSKGKKKDYDDDGI) has biased composition (basic and acidic residues).

It belongs to the TRAFAC class dynamin-like GTPase superfamily. GB1/RHD3 GTPase family. RHD3 subfamily.

The protein localises to the endoplasmic reticulum membrane. Functionally, cooperates with the reticulon proteins and tubule-shaping DP1 family proteins to generate and maintain the structure of the tubular endoplasmic reticulum network. Has GTPase activity, which is required for its function in ER organization. In Pyricularia oryzae (strain 70-15 / ATCC MYA-4617 / FGSC 8958) (Rice blast fungus), this protein is Protein SEY1.